A 944-amino-acid chain; its full sequence is LPS-assembly protein LptD (944 aa).

The N-terminal stretch at 1-33 is a signal peptide; it reads MALKSPAFRRKFPLLVTGGLLALQPLATSFVVA. Positions 52 to 102 are disordered; it reads KATGNLPPRPVHPGAAAASSGAEAPGEVGEAQAEKPMLVTESKGRGLKSRS. Positions 64-82 are enriched in low complexity; the sequence is PGAAAASSGAEAPGEVGEA.

This sequence belongs to the LptD family. Component of the lipopolysaccharide transport and assembly complex. Interacts with LptE and LptA.

It is found in the cell outer membrane. Together with LptE, is involved in the assembly of lipopolysaccharide (LPS) at the surface of the outer membrane. The chain is LPS-assembly protein LptD from Pseudomonas entomophila (strain L48).